Consider the following 359-residue polypeptide: tRNA N6-adenosine threonylcarbamoyltransferase (359 aa).

Positions 115 and 119 each coordinate Fe cation. Residues 137–141, aspartate 170, glycine 183, and asparagine 283 contribute to the substrate site; that span reads LVSGG. Aspartate 311 contributes to the Fe cation binding site. The tract at residues 328-359 is disordered; sequence APDSLDLAPRSRWPLDEKSAPLIGTGRRGAKA.

This sequence belongs to the KAE1 / TsaD family. The cofactor is Fe(2+).

The protein resides in the cytoplasm. The enzyme catalyses L-threonylcarbamoyladenylate + adenosine(37) in tRNA = N(6)-L-threonylcarbamoyladenosine(37) in tRNA + AMP + H(+). Functionally, required for the formation of a threonylcarbamoyl group on adenosine at position 37 (t(6)A37) in tRNAs that read codons beginning with adenine. Is involved in the transfer of the threonylcarbamoyl moiety of threonylcarbamoyl-AMP (TC-AMP) to the N6 group of A37, together with TsaE and TsaB. TsaD likely plays a direct catalytic role in this reaction. This is tRNA N6-adenosine threonylcarbamoyltransferase from Brucella anthropi (strain ATCC 49188 / DSM 6882 / CCUG 24695 / JCM 21032 / LMG 3331 / NBRC 15819 / NCTC 12168 / Alc 37) (Ochrobactrum anthropi).